The chain runs to 315 residues: Endolytic peptidoglycan transglycosylase RlpA (315 aa).

An N-terminal signal peptide occupies residues 1-19 (MGLALEKVCFLGVIFLISA). A lipid anchor (N-palmitoyl cysteine) is attached at cysteine 20. A lipid anchor (S-diacylglycerol cysteine) is attached at cysteine 20. Over residues 68–79 (SDSQDSNTKDQP) the composition is skewed to basic and acidic residues. Positions 68 to 92 (SDSQDSNTKDQPLDNGMRDSSSIQR) are disordered. Residues 242–315 (SVSGGKFSLQ…YNQNAVLTRE (74 aa)) form the SPOR domain.

The protein belongs to the RlpA family.

It is found in the cell membrane. Lytic transglycosylase with a strong preference for naked glycan strands that lack stem peptides. The chain is Endolytic peptidoglycan transglycosylase RlpA from Helicobacter pylori (strain ATCC 700392 / 26695) (Campylobacter pylori).